The following is a 101-amino-acid chain: Large ribosomal subunit protein uL23 (101 aa).

The protein belongs to the universal ribosomal protein uL23 family. In terms of assembly, part of the 50S ribosomal subunit. Contacts protein L29, and trigger factor when it is bound to the ribosome.

Its function is as follows. One of the early assembly proteins it binds 23S rRNA. One of the proteins that surrounds the polypeptide exit tunnel on the outside of the ribosome. Forms the main docking site for trigger factor binding to the ribosome. The chain is Large ribosomal subunit protein uL23 from Tolumonas auensis (strain DSM 9187 / NBRC 110442 / TA 4).